A 396-amino-acid polypeptide reads, in one-letter code: Probable sugar efflux transporter (396 aa).

Helical transmembrane passes span Val15 to Leu35, Val50 to Leu70, Leu81 to Phe101, Val103 to Ala123, Ala136 to Ile156, Thr169 to Pro189, Pro209 to Tyr229, Phe246 to Gly266, Ser275 to Ala295, Leu301 to Val321, Val333 to Gly353, and Ala364 to Phe384.

Belongs to the major facilitator superfamily. SotB (TC 2.A.1.2) family.

The protein resides in the cell inner membrane. Involved in the efflux of sugars. The physiological role may be the reduction of the intracellular concentration of toxic sugars or sugar metabolites. The chain is Probable sugar efflux transporter from Salmonella paratyphi C (strain RKS4594).